The chain runs to 392 residues: Succinate--CoA ligase [ADP-forming] subunit beta (392 aa).

One can recognise an ATP-grasp domain in the interval 9 to 248 (KEILRGFGVT…TSEEDPLEVE (240 aa)). ATP is bound by residues lysine 50, 57 to 59 (GRG), glutamate 103, methionine 106, and glutamate 111. Mg(2+) is bound by residues asparagine 203 and aspartate 217. Residues asparagine 268 and 325-327 (GIV) contribute to the substrate site.

Belongs to the succinate/malate CoA ligase beta subunit family. Heterotetramer of two alpha and two beta subunits. The cofactor is Mg(2+).

The enzyme catalyses succinate + ATP + CoA = succinyl-CoA + ADP + phosphate. The catalysed reaction is GTP + succinate + CoA = succinyl-CoA + GDP + phosphate. It functions in the pathway carbohydrate metabolism; tricarboxylic acid cycle; succinate from succinyl-CoA (ligase route): step 1/1. Its function is as follows. Succinyl-CoA synthetase functions in the citric acid cycle (TCA), coupling the hydrolysis of succinyl-CoA to the synthesis of either ATP or GTP and thus represents the only step of substrate-level phosphorylation in the TCA. The beta subunit provides nucleotide specificity of the enzyme and binds the substrate succinate, while the binding sites for coenzyme A and phosphate are found in the alpha subunit. The chain is Succinate--CoA ligase [ADP-forming] subunit beta from Chloroherpeton thalassium (strain ATCC 35110 / GB-78).